The chain runs to 494 residues: MTKLTQLTLTQAREGLAQGEFTSVELTEAYLKAMEQARPLNAYVLETPEIALEMAKESDRRIASGETGPLEGIPLGIKDMFATEGVRTTACAKILDNFIPQYESTVTSHLWRDGAVLLGKLNNDEFAMGSSNETSAFGPVVSPWRRDGDETPLVPGGSSGGSAAAVAAFLCAGATGTDTGGSIRQPAAFTGTVGIKPTYGRCSRWGIVAFASSLDQAGPFARTVNDAAVLLKSMAGYDPKDSTCVNRPVPDYEEAVGASIKGKKIGIPREYRMDGMSDEIDALWTEGARFLKDAGAEIVDISLPHTQYALPAYYIVAPAEASSNLARYDGVRFGERVPGRDVVEMYENTRAAGFGPEVRRRIMIGTYVLSAGYYDAYYLRAQKVRSLIKRDFDQVFAQGVDAVLTPATPSPAFGIGEKLKADPVEMYLNDVFTVTVNMAGLPGIAVPAGLSADGLPLGLQLIGRPFEEETLFSLAEVIEEAAGRFPVDKQWWRG.

Active-site charge relay system residues include K78 and S158. Residue S182 is the Acyl-ester intermediate of the active site.

The protein belongs to the amidase family. GatA subfamily. In terms of assembly, heterotrimer of A, B and C subunits.

The enzyme catalyses L-glutamyl-tRNA(Gln) + L-glutamine + ATP + H2O = L-glutaminyl-tRNA(Gln) + L-glutamate + ADP + phosphate + H(+). Allows the formation of correctly charged Gln-tRNA(Gln) through the transamidation of misacylated Glu-tRNA(Gln) in organisms which lack glutaminyl-tRNA synthetase. The reaction takes place in the presence of glutamine and ATP through an activated gamma-phospho-Glu-tRNA(Gln). This chain is Glutamyl-tRNA(Gln) amidotransferase subunit A, found in Xanthobacter autotrophicus (strain ATCC BAA-1158 / Py2).